The following is a 470-amino-acid chain: uncharacterized protein (470 aa).

A disordered region spans residues 439-470 (SIKSSKSKKQLKSSKSKKPIKHTKTKNIYVET). Residues 443-463 (SKSKKQLKSSKSKKPIKHTKT) are compositionally biased toward basic residues.

This is an uncharacterized protein from Acanthamoeba polyphaga mimivirus (APMV).